Here is a 766-residue protein sequence, read N- to C-terminus: Ent-copalyl diphosphate synthase 3 (766 aa).

The N-terminal 30 residues, 1–30 (FRSTAAGRCLPVTCCVFPRHFRVSSSSILP), are a transit peptide targeting the chloroplast. Residue Lys-222 participates in substrate binding. Mg(2+) contacts are provided by Asp-354 and Asp-356. A DXDD motif motif is present at residues 354 to 357 (DVDD). Lys-440 provides a ligand contact to substrate.

The protein belongs to the terpene synthase family. Tpsc subfamily. Requires Mg(2+) as cofactor. As to expression, accumulates in leaves, and, at low levels, in germinating seeds.

The protein localises to the plastid. It localises to the chloroplast. It carries out the reaction (2E,6E,10E)-geranylgeranyl diphosphate = ent-copalyl diphosphate. Its pathway is plant hormone biosynthesis; gibberellin biosynthesis. The protein operates within secondary metabolite biosynthesis; terpenoid biosynthesis. Its function is as follows. Involved in the biosynthesis of ent-kaurene diterpenoids natural products such as oridonin, miltiradiene, eriocalyxin B and nezukol, known to exhibit antitumor, anti-inflammatory and antibacterial activities, and in the production of gibberellins phytohormones. Catalyzes the conversion of (2E,6E,10E)-geranylgeranyl diphosphate (GGPP) to ent-copalyl diphosphate (ent-CPP). In Isodon eriocalyx (Plectranthus eriocalyx), this protein is Ent-copalyl diphosphate synthase 3.